Reading from the N-terminus, the 148-residue chain is UPF0756 membrane protein YeaL (148 aa).

4 helical membrane-spanning segments follow: residues 14–34 (ALGFISHNTTVAVSILVLIIV), 51–71 (LSIGIIILTIGIMAPIASGTL), 86–106 (LVAIAVGVIVSWLGGRGVTLM), and 121–141 (VLGVALFRGVPVGPLIAAGLV).

This sequence belongs to the UPF0756 family.

It localises to the cell membrane. The protein is UPF0756 membrane protein YeaL of Escherichia coli O127:H6 (strain E2348/69 / EPEC).